A 509-amino-acid chain; its full sequence is Histidine ammonia-lyase (509 aa).

Positions 142-144 form a cross-link, 5-imidazolinone (Ala-Gly); sequence ASG. 2,3-didehydroalanine (Ser) is present on Ser143.

Belongs to the PAL/histidase family. Post-translationally, contains an active site 4-methylidene-imidazol-5-one (MIO), which is formed autocatalytically by cyclization and dehydration of residues Ala-Ser-Gly.

It localises to the cytoplasm. The enzyme catalyses L-histidine = trans-urocanate + NH4(+). Its pathway is amino-acid degradation; L-histidine degradation into L-glutamate; N-formimidoyl-L-glutamate from L-histidine: step 1/3. The chain is Histidine ammonia-lyase from Sphingopyxis alaskensis (strain DSM 13593 / LMG 18877 / RB2256) (Sphingomonas alaskensis).